The following is a 391-amino-acid chain: 8-amino-7-oxononanoate synthase (391 aa).

Arg-19 is a binding site for substrate. 106 to 107 is a pyridoxal 5'-phosphate binding site; the sequence is GY. His-131 is a substrate binding site. Pyridoxal 5'-phosphate-binding residues include Ser-178, His-206, and Thr-234. Lys-237 is modified (N6-(pyridoxal phosphate)lysine). Thr-353 serves as a coordination point for substrate.

Belongs to the class-II pyridoxal-phosphate-dependent aminotransferase family. BioF subfamily. In terms of assembly, homodimer. Requires pyridoxal 5'-phosphate as cofactor.

It catalyses the reaction 6-carboxyhexanoyl-[ACP] + L-alanine + H(+) = (8S)-8-amino-7-oxononanoate + holo-[ACP] + CO2. It participates in cofactor biosynthesis; biotin biosynthesis. Functionally, catalyzes the decarboxylative condensation of pimeloyl-[acyl-carrier protein] and L-alanine to produce 8-amino-7-oxononanoate (AON), [acyl-carrier protein], and carbon dioxide. The protein is 8-amino-7-oxononanoate synthase of Pelobacter propionicus (strain DSM 2379 / NBRC 103807 / OttBd1).